The following is a 198-amino-acid chain: Nucleoid occlusion factor SlmA (198 aa).

The region spanning 10 to 70 is the HTH tetR-type domain; it reads NRREEILQSL…SLIEFIEDSL (61 aa). A DNA-binding region (H-T-H motif) is located at residues 33-52; that stretch reads TTAKLAASVGVSEAALYRHF. The stretch at 119–144 forms a coiled coil; that stretch reads DRLQGRINQLFERIEVQLRQVMREKK.

It belongs to the nucleoid occlusion factor SlmA family. As to quaternary structure, homodimer. Interacts with FtsZ.

The protein resides in the cytoplasm. It localises to the nucleoid. Its function is as follows. Required for nucleoid occlusion (NO) phenomenon, which prevents Z-ring formation and cell division over the nucleoid. Acts as a DNA-associated cell division inhibitor that binds simultaneously chromosomal DNA and FtsZ, and disrupts the assembly of FtsZ polymers. SlmA-DNA-binding sequences (SBS) are dispersed on non-Ter regions of the chromosome, preventing FtsZ polymerization at these regions. The protein is Nucleoid occlusion factor SlmA of Klebsiella pneumoniae (strain 342).